The chain runs to 375 residues: Tyrosine--tRNA ligase (375 aa).

Residues Tyr-37, Tyr-168, Gln-172, Asp-175, and Gln-190 each contribute to the L-tyrosine site. The short motif at 251–255 (KMSKS) is the 'KMSKS' region element. An ATP-binding site is contributed by Lys-254.

Belongs to the class-I aminoacyl-tRNA synthetase family. TyrS type 4 subfamily. As to quaternary structure, homodimer.

It is found in the cytoplasm. The catalysed reaction is tRNA(Tyr) + L-tyrosine + ATP = L-tyrosyl-tRNA(Tyr) + AMP + diphosphate + H(+). Functionally, catalyzes the attachment of tyrosine to tRNA(Tyr) in a two-step reaction: tyrosine is first activated by ATP to form Tyr-AMP and then transferred to the acceptor end of tRNA(Tyr). This is Tyrosine--tRNA ligase from Pyrococcus abyssi (strain GE5 / Orsay).